Here is a 294-residue protein sequence, read N- to C-terminus: Ribosomal RNA small subunit methyltransferase H (294 aa).

S-adenosyl-L-methionine is bound by residues 36–38 (GGH), Asp55, Phe82, Asp97, and Gln104.

It belongs to the methyltransferase superfamily. RsmH family.

The protein resides in the cytoplasm. It catalyses the reaction cytidine(1402) in 16S rRNA + S-adenosyl-L-methionine = N(4)-methylcytidine(1402) in 16S rRNA + S-adenosyl-L-homocysteine + H(+). Specifically methylates the N4 position of cytidine in position 1402 (C1402) of 16S rRNA. The chain is Ribosomal RNA small subunit methyltransferase H from Synechococcus sp. (strain CC9605).